The following is a 282-amino-acid chain: Bifunctional protein FolD (282 aa).

NADP(+)-binding positions include 166 to 168 (GRS) and Ser191.

Belongs to the tetrahydrofolate dehydrogenase/cyclohydrolase family. As to quaternary structure, homodimer.

It catalyses the reaction (6R)-5,10-methylene-5,6,7,8-tetrahydrofolate + NADP(+) = (6R)-5,10-methenyltetrahydrofolate + NADPH. The enzyme catalyses (6R)-5,10-methenyltetrahydrofolate + H2O = (6R)-10-formyltetrahydrofolate + H(+). Its pathway is one-carbon metabolism; tetrahydrofolate interconversion. Its function is as follows. Catalyzes the oxidation of 5,10-methylenetetrahydrofolate to 5,10-methenyltetrahydrofolate and then the hydrolysis of 5,10-methenyltetrahydrofolate to 10-formyltetrahydrofolate. The protein is Bifunctional protein FolD of Acidovorax ebreus (strain TPSY) (Diaphorobacter sp. (strain TPSY)).